We begin with the raw amino-acid sequence, 496 residues long: Fibronectin type III and SPRY domain-containing protein 1 (496 aa).

The stretch at 4–99 forms a coiled coil; that stretch reads QREALRKIIT…ALESSEELLE (96 aa). In terms of domain architecture, COS spans 105–162; the sequence is LQAMDREDFPQAAKQIKDGVTMAPAFRLSLKAKVSDNMSHLMVDFAQERQMLQALKFL. A Fibronectin type-III domain is found at 164–268; the sequence is VPSAPVIDLA…EPVTLETPAF (105 aa). In terms of domain architecture, B30.2/SPRY spans 268–477; that stretch reads FMFRLDASTS…VTTGLQVPSS (210 aa). The disordered stretch occupies residues 301-336; it reads KAREKDGKGRTASPINSPARGTPSPKRMPSGRGGRD. Omega-N-methylarginine is present on residues Arg310 and Arg320.

Oligomerization is required for binding to microtubules.

Its subcellular location is the cytoplasm. The protein localises to the cytoskeleton. It is found in the microtubule organizing center. The protein resides in the centrosome. It localises to the nucleus. Its subcellular location is the cleavage furrow. In terms of biological role, may be involved in microtubule organization and stabilization. In Macaca fascicularis (Crab-eating macaque), this protein is Fibronectin type III and SPRY domain-containing protein 1 (FSD1).